We begin with the raw amino-acid sequence, 463 residues long: L-seryl-tRNA(Sec) selenium transferase (463 aa).

Lys-295 is subject to N6-(pyridoxal phosphate)lysine.

The protein belongs to the SelA family. As to quaternary structure, homodecamer; pentamer of dimers. Binds only one seryl-tRNA(Sec) per dimer. Requires pyridoxal 5'-phosphate as cofactor.

Its subcellular location is the cytoplasm. It carries out the reaction L-seryl-tRNA(Sec) + selenophosphate + H(+) = L-selenocysteinyl-tRNA(Sec) + phosphate. It functions in the pathway aminoacyl-tRNA biosynthesis; selenocysteinyl-tRNA(Sec) biosynthesis; selenocysteinyl-tRNA(Sec) from L-seryl-tRNA(Sec) (bacterial route): step 1/1. Functionally, converts seryl-tRNA(Sec) to selenocysteinyl-tRNA(Sec) required for selenoprotein biosynthesis. This Salmonella typhimurium (strain LT2 / SGSC1412 / ATCC 700720) protein is L-seryl-tRNA(Sec) selenium transferase.